The sequence spans 396 residues: Na(+)/H(+) antiporter NhaA 2 (396 aa).

11 helical membrane-spanning segments follow: residues 17–37 (LSGL…NSDF), 62–82 (LLHW…GLEI), 98–118 (SFPI…YISL), 125–145 (GFGV…MLLG), 154–174 (LFLV…VAIF), 179–199 (LHFE…FLNY), 209–229 (IILG…STIA), 268–288 (FSAF…IIDF), 296–316 (LIVL…IFSF), 337–357 (IFAV…ISHL), and 368–388 (VKLG…VLLI).

It belongs to the NhaA Na(+)/H(+) (TC 2.A.33) antiporter family.

Its subcellular location is the cell inner membrane. It carries out the reaction Na(+)(in) + 2 H(+)(out) = Na(+)(out) + 2 H(+)(in). Na(+)/H(+) antiporter that extrudes sodium in exchange for external protons. This Aliarcobacter butzleri (strain RM4018) (Arcobacter butzleri) protein is Na(+)/H(+) antiporter NhaA 2.